A 349-amino-acid chain; its full sequence is Dipeptide transport ATP-binding protein DppD (349 aa).

The ABC transporter domain occupies 7–258 (LEVKNLHVNF…PQHPYTWGLL (252 aa)). 43-50 (GESGSGKS) serves as a coordination point for ATP.

The protein belongs to the ABC transporter superfamily. The complex is composed of two ATP-binding proteins (DppD and DppF), two transmembrane proteins (DppB and DppC) and a solute-binding protein (DppA).

It is found in the cell membrane. The enzyme catalyses a dipeptide(out) + ATP + H2O = a dipeptide(in) + ADP + phosphate + H(+). In terms of biological role, part of the ABC transporter DppABCDF involved in dipeptide transport. Responsible for energy coupling to the transport system. This Lactococcus lactis subsp. cremoris (strain MG1363) protein is Dipeptide transport ATP-binding protein DppD.